The chain runs to 394 residues: MVNTMKTKLLCVLLLCGAVFSLPRQETYRQLARGSRAYGDPHATCYKDQGVTYRGTWSTSESGAQCINWNSNLLIRRTYNGRMPEAVKLGLGNHNYCRNPDGASKPWCYVIKARKFTSESCSVPVCSKATCGLRKYKEPQLHSTGGLFTDITSHPWQAAIFAQNRRSSGERFLCGGILISSCWVLTAAHCFQERYPPQHLRVVLGRTYRVKPGKEEQTFEVEKCIVHEEFDDDTYNNDIALLQLKSGSPQCAQESDSVRAICLPEANLQLPDWTECELSGYGKHKSSSPFYSEQLKEGHVRLYPSSRCTSKFLFNKTVTNNMLCAGDTRSGEIYPNVHDACQGDSGGPLVCMNDNHMTLLGIISWGVGCGEKDIPGVYTKVTNYLGWIRDNMRP.

The signal sequence occupies residues 1-36 (MVNTMKTKLLCVLLLCGAVFSLPRQETYRQLARGSR). One can recognise a Kringle domain in the interval 45 to 126 (CYKDQGVTYR…TSESCSVPVC (82 aa)). 9 disulfides stabilise this stretch: C45-C126, C66-C108, C97-C121, C131-C262, C174-C190, C182-C251, C276-C351, C308-C324, and C341-C369. The region spanning 143-393 (STGGLFTDIT…YLGWIRDNMR (251 aa)) is the Peptidase S1 domain. Active-site charge relay system residues include H189 and D238. N-linked (GlcNAc...) asparagine glycosylation occurs at N315. The Charge relay system role is filled by S345.

The protein belongs to the peptidase S1 family. In terms of assembly, monomer.

It localises to the secreted. The enzyme catalyses Specific cleavage of Arg-|-Val bond in plasminogen to form plasmin.. Probably essential to support the feeding habits of this exclusively haematophagous animal. Probable potent thrombolytic agent. This Desmodus rotundus (Vampire bat) protein is Salivary plasminogen activator gamma.